A 96-amino-acid polypeptide reads, in one-letter code: Co-chaperonin GroES (96 aa).

The protein belongs to the GroES chaperonin family. In terms of assembly, heptamer of 7 subunits arranged in a ring. Interacts with the chaperonin GroEL.

The protein localises to the cytoplasm. Together with the chaperonin GroEL, plays an essential role in assisting protein folding. The GroEL-GroES system forms a nano-cage that allows encapsulation of the non-native substrate proteins and provides a physical environment optimized to promote and accelerate protein folding. GroES binds to the apical surface of the GroEL ring, thereby capping the opening of the GroEL channel. The polypeptide is Co-chaperonin GroES (Caulobacter sp. (strain K31)).